A 373-amino-acid chain; its full sequence is Plasmepsin VIII (373 aa).

An N-terminal signal peptide occupies residues 1–21 (MNKFFVFPLLLILNSIVLVKS). Residues 50–370 (FIGEISIGNP…EKDNMRIGLA (321 aa)) enclose the Peptidase A1 domain. Residues aspartate 68 and aspartate 258 contribute to the active site.

The protein belongs to the peptidase A1 family.

During the development in the mosquito vector, plays an essential role in sporozoite egress from the oocyst and sporozoite gliding motility, which is required for the invasion of salivary glands and subsequent transmission to the host. The sequence is that of Plasmepsin VIII from Plasmodium berghei (strain Anka).